The following is a 448-amino-acid chain: Fibulin-5 (448 aa).

The signal sequence occupies residues 1 to 23 (MPGIKRILTVTILALCLPSPGNA). An EGF-like 1; calcium-binding domain is found at 42–82 (DIDECRTIPEACRGDMMCVNQNGRYLCIPRTNPVYRGPYSN). 17 cysteine pairs are disulfide-bonded: Cys46–Cys59, Cys53–Cys68, Cys131–Cys144, Cys138–Cys153, Cys155–Cys166, Cys172–Cys181, Cys177–Cys190, Cys192–Cys205, Cys211–Cys221, Cys217–Cys230, Cys232–Cys245, Cys251–Cys262, Cys258–Cys271, Cys273–Cys286, Cys292–Cys305, Cys299–Cys314, and Cys320–Cys332. The short motif at 54 to 56 (RGD) is the Cell attachment site element. The EGF-like 2; calcium-binding domain occupies 127 to 167 (DVDECATDSHQCNPTQICINTEGGYTCSCTDGYWLLEGQCL). The 39-residue stretch at 168–206 (DIDECRYGYCQQLCANVPGSYSCTCNPGFTLNEDGRSCQ) folds into the EGF-like 3; calcium-binding domain. Residues 207 to 246 (DVNECATENPCVQTCVNTYGSFICRCDPGYELEEDGVHCS) enclose the EGF-like 4; calcium-binding domain. Residues 245 to 448 (CSDMDECSFS…LRIYVSQYPF (204 aa)) are interaction with LOXL1. The region spanning 247 to 287 (DMDECSFSEFLCQHECVNQPGTYFCSCPPGYILLDDNRSCQ) is the EGF-like 5; calcium-binding domain. N-linked (GlcNAc...) asparagine glycosylation is found at Asn283 and Asn296. Positions 288–333 (DINECEHRNHTCNLQQTCYNLQGGFKCIDPIRCEEPYLRISDNRCM) constitute an EGF-like 6; calcium-binding domain.

Belongs to the fibulin family. Homodimer. Monomer, homodimerizes in presence of Ca(2+). Interacts with ELN. Interacts (via N-terminus) with the integrins ITGAV/ITGB3, ITGAV/ITGB5 and ITGA9/ITGB1. Interacts with FBN1 (via N-terminal domain). Forms a ternary complex with ELN and FBN1. Interacts with EFEMP2 with moderate affinity. Interacts with LOXL1. In terms of processing, N-glycosylated.

Its subcellular location is the secreted. It localises to the extracellular space. The protein resides in the extracellular matrix. In terms of biological role, essential for elastic fiber formation, is involved in the assembly of continuous elastin (ELN) polymer and promotes the interaction of microfibrils and ELN. Stabilizes and organizes elastic fibers in the skin, lung and vasculature. Promotes adhesion of endothelial cells through interaction of integrins and the RGD motif. Vascular ligand for integrin receptors which may play a role in vascular development and remodeling. May act as an adapter that mediates the interaction between FBN1 and ELN. The polypeptide is Fibulin-5 (FBLN5) (Pongo abelii (Sumatran orangutan)).